The primary structure comprises 410 residues: Gamma-glutamyl phosphate reductase (410 aa).

Belongs to the gamma-glutamyl phosphate reductase family.

It localises to the cytoplasm. The catalysed reaction is L-glutamate 5-semialdehyde + phosphate + NADP(+) = L-glutamyl 5-phosphate + NADPH + H(+). Its pathway is amino-acid biosynthesis; L-proline biosynthesis; L-glutamate 5-semialdehyde from L-glutamate: step 2/2. Catalyzes the NADPH-dependent reduction of L-glutamate 5-phosphate into L-glutamate 5-semialdehyde and phosphate. The product spontaneously undergoes cyclization to form 1-pyrroline-5-carboxylate. This Campylobacter jejuni subsp. jejuni serotype O:2 (strain ATCC 700819 / NCTC 11168) protein is Gamma-glutamyl phosphate reductase.